The primary structure comprises 333 residues: Cysteine protease (333 aa).

Residues 1–18 (MKFLLVAALCALVAIGSC) form the signal peptide. Residues 19–108 (KPTREEIKTF…MEAAKEPLIN (90 aa)) constitute a propeptide, activation peptide. The N-linked (GlcNAc...) asparagine glycan is linked to N93. Intrachain disulfides connect C134-C182 and C168-C214. The active site involves C137. Active-site residues include H281 and N301.

Belongs to the peptidase C1 family. In terms of assembly, homodimer.

Its function is as follows. Cysteine protease. The sequence is that of Cysteine protease from Blomia tropicalis (Mite).